The following is a 304-amino-acid chain: Small ribosomal subunit biogenesis GTPase RsgA (304 aa).

Residues 70–229 enclose the CP-type G domain; sequence HNELNRPNIA…IADTPGFSKL (160 aa). Residues 119–122 and 172–180 each bind GTP; these read TKID and GQTGVGKST. Positions 253, 259, 261, and 267 each coordinate Zn(2+).

It belongs to the TRAFAC class YlqF/YawG GTPase family. RsgA subfamily. As to quaternary structure, monomer. Associates with 30S ribosomal subunit, binds 16S rRNA. Zn(2+) serves as cofactor.

The protein localises to the cytoplasm. In terms of biological role, one of several proteins that assist in the late maturation steps of the functional core of the 30S ribosomal subunit. Helps release RbfA from mature subunits. May play a role in the assembly of ribosomal proteins into the subunit. Circularly permuted GTPase that catalyzes slow GTP hydrolysis, GTPase activity is stimulated by the 30S ribosomal subunit. This Phytoplasma mali (strain AT) protein is Small ribosomal subunit biogenesis GTPase RsgA.